Here is a 239-residue protein sequence, read N- to C-terminus: Ditrans,polycis-undecaprenyl-diphosphate synthase ((2E,6E)-farnesyl-diphosphate specific) (239 aa).

Asp18 is a catalytic residue. Residue Asp18 coordinates Mg(2+). Residues Gly19–Arg22, Trp23, Arg31, His35, and Ser63–Glu65 each bind substrate. The Proton acceptor role is filled by Asn66. Substrate is bound by residues Trp67, Arg69, Arg186, and Arg192–Ser194. Glu205 contacts Mg(2+).

It belongs to the UPP synthase family. In terms of assembly, homodimer. It depends on Mg(2+) as a cofactor.

It carries out the reaction 8 isopentenyl diphosphate + (2E,6E)-farnesyl diphosphate = di-trans,octa-cis-undecaprenyl diphosphate + 8 diphosphate. Its function is as follows. Catalyzes the sequential condensation of isopentenyl diphosphate (IPP) with (2E,6E)-farnesyl diphosphate (E,E-FPP) to yield (2Z,6Z,10Z,14Z,18Z,22Z,26Z,30Z,34E,38E)-undecaprenyl diphosphate (di-trans,octa-cis-UPP). UPP is the precursor of glycosyl carrier lipid in the biosynthesis of bacterial cell wall polysaccharide components such as peptidoglycan and lipopolysaccharide. This Haemophilus influenzae (strain ATCC 51907 / DSM 11121 / KW20 / Rd) protein is Ditrans,polycis-undecaprenyl-diphosphate synthase ((2E,6E)-farnesyl-diphosphate specific).